We begin with the raw amino-acid sequence, 362 residues long: Chorismate synthase (362 aa).

Arg-46 serves as a coordination point for NADP(+). Residues 121-123 (RAS), 237-238 (NA), Gly-277, 292-296 (KPTPS), and Arg-318 contribute to the FMN site.

It belongs to the chorismate synthase family. In terms of assembly, homotetramer. Requires FMNH2 as cofactor.

The enzyme catalyses 5-O-(1-carboxyvinyl)-3-phosphoshikimate = chorismate + phosphate. It participates in metabolic intermediate biosynthesis; chorismate biosynthesis; chorismate from D-erythrose 4-phosphate and phosphoenolpyruvate: step 7/7. In terms of biological role, catalyzes the anti-1,4-elimination of the C-3 phosphate and the C-6 proR hydrogen from 5-enolpyruvylshikimate-3-phosphate (EPSP) to yield chorismate, which is the branch point compound that serves as the starting substrate for the three terminal pathways of aromatic amino acid biosynthesis. This reaction introduces a second double bond into the aromatic ring system. This chain is Chorismate synthase, found in Campylobacter lari (strain RM2100 / D67 / ATCC BAA-1060).